A 729-amino-acid chain; its full sequence is MNPFQQNESKETLFSPVSTEETPPRLSSPAKKTPPKICGSNYPLSIAFIVVNEFCERFSYYGMKAVLTLYFLYFLHWNEDTSTSVYHAFSSLCYFTPILGAAIADSWLGKFKTIIYLSLVNVLGHVIKSLSAFPILGGKVVHTVLSLVGLCLIALGTGGIKPCVAAFGGDQFEEKHAEERTRYFSGFYLAINAGSLISTFITPMLRGDVQCFGEDCYALAFGVPGLLMVIALVVFAMGSKMYKKPPPEGNIVAQVVKCIWFAISNRFKNRSEDIPKRQHWLDWAAEKYPKQLIMDVKTLTRVLFLYIPLPMFWALLDQQGSRWTLQATKMNGNLGFFVLQPDQMQVLNPLLVLIFIPLFDLVIYRLISKCGINFTSLRKMAVGMVLACLAFAAAATVEIKINEMAPPQPGSQEILLQVLNLADDEVKLTVLGNNNNSLLADSIKSFQKTPHYSKIHLNTKSQDFYFHLKYHNLSIYTEHSVEERNWYSLIIREDGKSISSIMVKDMENETTYGMTAIRFINTLQENVNISLGTDISLNVGENYGVSAYRTVQRGEYPAVHCKTEDKDFSLNLGLLDFGASYLFVITNSTKQGLQAWKMEDIPANKVSIAWQLPQYALVTAGEVMFSVTGLEFSYSQAPSSMKSVLQAAWLLTVAIGNIIVLVVAQFSGLVQWAEFVLFSCLLLVVCLIFSIMGYYYIPIKSEDIQGPEDKQIPHMQGNMINLETKKTKL.

A disordered region spans residues 1–34 (MNPFQQNESKETLFSPVSTEETPPRLSSPAKKTP). The Cytoplasmic portion of the chain corresponds to 1–57 (MNPFQQNESKETLFSPVSTEETPPRLSSPAKKTPPKICGSNYPLSIAFIVVNEFCER). Position 9 is a phosphoserine (Ser9). The residue at position 12 (Thr12) is a Phosphothreonine. Ser28 bears the Phosphoserine mark. The helical transmembrane segment at 58 to 78 (FSYYGMKAVLTLYFLYFLHWN) threads the bilayer. Over 79–87 (EDTSTSVYH) the chain is Extracellular. A helical transmembrane segment spans residues 88–108 (AFSSLCYFTPILGAAIADSWL). At 109 to 113 (GKFKT) the chain is on the cytoplasmic side. The chain crosses the membrane as a helical span at residues 114–134 (IIYLSLVNVLGHVIKSLSAFP). The Extracellular portion of the chain corresponds to 135 to 139 (ILGGK). A helical transmembrane segment spans residues 140-160 (VVHTVLSLVGLCLIALGTGGI). Residues 161–183 (KPCVAAFGGDQFEEKHAEERTRY) lie on the Cytoplasmic side of the membrane. Residues 184–204 (FSGFYLAINAGSLISTFITPM) traverse the membrane as a helical segment. At 205–217 (LRGDVQCFGEDCY) the chain is on the extracellular side. A helical transmembrane segment spans residues 218 to 238 (ALAFGVPGLLMVIALVVFAMG). The Cytoplasmic portion of the chain corresponds to 239-295 (SKMYKKPPPEGNIVAQVVKCIWFAISNRFKNRSEDIPKRQHWLDWAAEKYPKQLIMD). Residues 296–316 (VKTLTRVLFLYIPLPMFWALL) form a helical membrane-spanning segment. Residues 317-343 (DQQGSRWTLQATKMNGNLGFFVLQPDQ) are Extracellular-facing. Residues 344-364 (MQVLNPLLVLIFIPLFDLVIY) form a helical membrane-spanning segment. Residues 365 to 380 (RLISKCGINFTSLRKM) are Cytoplasmic-facing. A helical transmembrane segment spans residues 381–401 (AVGMVLACLAFAAAATVEIKI). At 402 to 611 (NEMAPPQPGS…PANKVSIAWQ (210 aa)) the chain is on the extracellular side. Residues 402–611 (NEMAPPQPGS…PANKVSIAWQ (210 aa)) are extracellular domain (ECD). Residues Asn435, Asn472, Asn508, Asn528, and Asn587 are each glycosylated (N-linked (GlcNAc...) asparagine). A helical membrane pass occupies residues 612-632 (LPQYALVTAGEVMFSVTGLEF). The Cytoplasmic portion of the chain corresponds to 633–643 (SYSQAPSSMKS). Residues 644-664 (VLQAAWLLTVAIGNIIVLVVA) form a helical membrane-spanning segment. The Extracellular segment spans residues 665 to 674 (QFSGLVQWAE). A helical transmembrane segment spans residues 675–695 (FVLFSCLLLVVCLIFSIMGYY). The Cytoplasmic segment spans residues 696–729 (YIPIKSEDIQGPEDKQIPHMQGNMINLETKKTKL).

The protein belongs to the major facilitator superfamily. Proton-dependent oligopeptide transporter (POT/PTR) (TC 2.A.17) family. As to quaternary structure, interacts (via extracellular domain region) with trypsin. In terms of tissue distribution, strongly expressed in kidney. Also detected in brain, lung, liver and heart.

The protein localises to the apical cell membrane. It is found in the cytoplasmic vesicle. The protein resides in the phagosome membrane. It localises to the cell membrane. The catalysed reaction is a dipeptide(out) + 2 H(+)(out) = a dipeptide(in) + 2 H(+)(in). The enzyme catalyses N-acetyl-D-muramoyl-L-alanyl-D-isoglutamine(out) + 3 H(+)(out) = N-acetyl-D-muramoyl-L-alanyl-D-isoglutamine(in) + 3 H(+)(in). It carries out the reaction glycyl-L-leucine(out) + 2 H(+)(out) = glycyl-L-leucine(in) + 2 H(+)(in). It catalyses the reaction glycyl-L-lysine(out) + 2 H(+)(out) = glycyl-L-lysine(in) + 2 H(+)(in). The catalysed reaction is glycyl-L-glutamate(out) + 3 H(+)(out) = glycyl-L-glutamate(in) + 3 H(+)(in). The enzyme catalyses L-alanyl-L-alanine(out) + 2 H(+)(out) = L-alanyl-L-alanine(in) + 2 H(+)(in). It carries out the reaction an L-amino acid tripeptide(out) + 2 H(+)(out) = an L-amino acid tripeptide(in) + 2 H(+)(in). It catalyses the reaction carnosine(out) + 2 H(+)(out) = carnosine(in) + 2 H(+)(in). Proton-coupled amino-acid transporter that transports oligopeptides of 2 to 4 amino acids with a preference for dipeptides. Transports neutral and anionic dipeptides with a proton to peptide stoichiometry of 2:1 or 3:1. In kidney, involved in the absorption of circulating di- and tripeptides from the glomerular filtrate. Can also transport beta-lactam antibiotics, such as the aminocephalosporin cefadroxil, and other antiviral and anticancer drugs. Transports the dipeptide-like aminopeptidase inhibitor bestatin. Also able to transport carnosine. Involved in innate immunity by promoting the detection of microbial pathogens by NOD-like receptors (NLRs). Mediates transport of bacterial peptidoglycans across the plasma membrane or, in macrophages, the phagosome membrane: catalyzes the transport of certain bacterial peptidoglycans, such as muramyl dipeptide (MDP), the NOD2 ligand. The protein is Solute carrier family 15 member 2 of Oryctolagus cuniculus (Rabbit).